We begin with the raw amino-acid sequence, 1032 residues long: Integrin alpha-4 (1032 aa).

Residues 1–33 form the signal peptide; it reads MAWEARREPGPRRAAVRETVMLLLCLGVPTGRP. FG-GAP repeat units lie at residues 35-100, 110-177, 185-237, 238-291, 292-351, 355-412, and 416-478; these read NVDT…PGQT, NGEP…TELS, QDYV…KYKA, FLDK…EKEL, NILH…GAVM, ETNL…GISS, and QRIE…HPES. Residues 35 to 977 lie on the Extracellular side of the membrane; sequence NVDTESALLY…HHQRPKRYFT (943 aa). Asn79 carries an N-linked (GlcNAc...) asparagine glycan. A disulfide bridge links Cys91 with Cys101. The N-linked (GlcNAc...) asparagine glycan is linked to Asn138. Cystine bridges form between Cys144–Cys165 and Cys183–Cys198. Asn229 carries an N-linked (GlcNAc...) asparagine glycan. Ca(2+) contacts are provided by Asp314, Asn316, Asp318, Asp322, Asp377, Asp379, Asp381, Asp385, Asp439, Asp441, Asn443, Tyr445, and Asp447. Asn480 is a glycosylation site (N-linked (GlcNAc...) asparagine). Cystine bridges form between Cys486-Cys495 and Cys501-Cys557. 2 N-linked (GlcNAc...) asparagine glycosylation sites follow: Asn518 and Asn538. The SG1 signature appears at 606 to 616; the sequence is KKEKDIMKKTI. Cys622 and Cys627 are joined by a disulfide. N-linked (GlcNAc...) asparagine glycosylation is found at Asn626, Asn645, and Asn660. Residues Cys698 and Cys711 are joined by a disulfide bond. 2 N-linked (GlcNAc...) asparagine glycosylation sites follow: Asn806 and Asn821. Intrachain disulfides connect Cys852–Cys890 and Cys897–Cys902. Residues 978-1001 traverse the membrane as a helical segment; the sequence is IVIISSSLLLGLIVLLLISYVMWK. The Cytoplasmic segment spans residues 1002–1032; the sequence is AGFFKRQYKSILQEENRRDSWSYINSKSNDD. A GFFKR motif motif is present at residues 1003–1007; that stretch reads GFFKR. Ser1021 is modified (phosphoserine).

The protein belongs to the integrin alpha chain family. In terms of assembly, heterodimer of an alpha and a beta subunit. The alpha subunit can sometimes be cleaved into two non-covalently associated fragments. Alpha-4 associates with either beta-1 or beta-7. Alpha-4 interacts with PXN, LPXN, and TGFB1I1/HIC5. Interacts with CSPG4 through CSPG4 chondroitin sulfate glycosaminoglycan. Interacts with JAML; integrin alpha-4/beta-1 may regulate leukocyte to endothelial cells adhesion by controlling JAML homodimerization. ITGA4:ITGB1 is found in a ternary complex with CX3CR1 and CX3CL1. Interacts with MDK. ITGA4:ITGB1 interacts with MDK; this interaction mediates MDK-induced osteoblast cells migration through PXN phosphorylation. Integrin ITGA4:ITGB1 interacts with SVEP1 (via Sushi domain 21); thereby inhibits Ca(2+) intracellular signaling and as a result represses vasocontraction. ITGA4:ITGB1 interacts with SELP. ITGA4:ITGB1 interacts with BCAM. In terms of processing, phosphorylation on Ser-1027 inhibits PXN binding. In terms of tissue distribution, expressed in vascular smooth muscle cells (at protein level).

The protein resides in the membrane. Functionally, integrins alpha-4/beta-1 (VLA-4) and alpha-4/beta-7 are receptors for fibronectin. They recognize one or more domains within the alternatively spliced CS-1 and CS-5 regions of fibronectin. They are also receptors for VCAM1. Integrin alpha-4/beta-1 recognizes the sequence Q-I-D-S in VCAM1. Integrin alpha-4/beta-7 is also a receptor for MADCAM1. It recognizes the sequence L-D-T in MADCAM1. On activated endothelial cells integrin VLA-4 triggers homotypic aggregation for most VLA-4-positive leukocyte cell lines. It may also participate in cytolytic T-cell interactions with target cells. ITGA4:ITGB1 binds to fractalkine (CX3CL1) and may act as its coreceptor in CX3CR1-dependent fractalkine signaling. ITGA4:ITGB1 binds to PLA2G2A via a site (site 2) which is distinct from the classical ligand-binding site (site 1) and this induces integrin conformational changes and enhanced ligand binding to site 1. Integrin ITGA4:ITGB1 represses PRKCA-mediated L-type voltage-gated channel Ca(2+) influx and ROCK-mediated calcium sensitivity in vascular smooth muscle cells via its interaction with SVEP1, thereby inhibiting vasocontraction. The sequence is that of Integrin alpha-4 (ITGA4) from Homo sapiens (Human).